The primary structure comprises 299 residues: UTP--glucose-1-phosphate uridylyltransferase (299 aa).

It belongs to the UDPGP type 2 family.

The catalysed reaction is alpha-D-glucose 1-phosphate + UTP + H(+) = UDP-alpha-D-glucose + diphosphate. The protein operates within carbohydrate metabolism; nucleotide-sugar metabolism. It functions in the pathway capsule biogenesis; capsule polysaccharide biosynthesis. This is UTP--glucose-1-phosphate uridylyltransferase (cap4C) from Streptococcus pneumoniae serotype 4 (strain ATCC BAA-334 / TIGR4).